Reading from the N-terminus, the 320-residue chain is Small ribosomal subunit protein mS35 (320 aa).

The interval 24–63 is disordered; it reads SVASPAAPRAGPRTASRSERPMRRKALPPRTEKMDTDQDW.

Belongs to the mitochondrion-specific ribosomal protein mS35 family. Component of the mitochondrial ribosome small subunit (28S) which comprises a 12S rRNA and about 30 distinct proteins.

It is found in the mitochondrion. This is Small ribosomal subunit protein mS35 from Mus musculus (Mouse).